A 264-amino-acid chain; its full sequence is uncharacterized protein (264 aa).

A disordered region spans residues methionine 1 to glutamate 20.

The protein belongs to the mimivirus R73/L269/L862 family.

This is an uncharacterized protein from Acanthamoeba polyphaga mimivirus (APMV).